Consider the following 431-residue polypeptide: Enolase (431 aa).

(2R)-2-phosphoglycerate is bound at residue Gln167. The active-site Proton donor is Glu209. Asp246, Glu289, and Asp316 together coordinate Mg(2+). 4 residues coordinate (2R)-2-phosphoglycerate: Lys341, Arg370, Ser371, and Lys392. The Proton acceptor role is filled by Lys341.

It belongs to the enolase family. In terms of assembly, component of the RNA degradosome, a multiprotein complex involved in RNA processing and mRNA degradation. Requires Mg(2+) as cofactor.

It localises to the cytoplasm. The protein localises to the secreted. Its subcellular location is the cell surface. The catalysed reaction is (2R)-2-phosphoglycerate = phosphoenolpyruvate + H2O. Its pathway is carbohydrate degradation; glycolysis; pyruvate from D-glyceraldehyde 3-phosphate: step 4/5. Catalyzes the reversible conversion of 2-phosphoglycerate (2-PG) into phosphoenolpyruvate (PEP). It is essential for the degradation of carbohydrates via glycolysis. In Shewanella baltica (strain OS155 / ATCC BAA-1091), this protein is Enolase.